The chain runs to 506 residues: UDP-glycosyltransferase eriJ (506 aa).

This sequence belongs to the UDP-glycosyltransferase family.

The catalysed reaction is 11-O-acetylcyathatriol + UDP-alpha-D-xylose = erinacine Q + UDP + H(+). It carries out the reaction 11-O-acetylcyathatriol + UDP-alpha-D-glucose = erinacine Q2 + UDP + H(+). It participates in secondary metabolite biosynthesis. UDP-glycosyltransferase; part of the gene cluster that mediates the biosynthesis of erinacines, cyathane-xylosides that show unique biological activities, including leishmanicidal activity, stimulating activity for nerve growth-factor synthesis, and agonistic activity toward the kappa opioid receptor. Within the pathway, eriJ tranfers xylose from UDP-xylose onto C-14 of 11-O-acetyl-cyathatriol to form eracine Q, and, at a lower rate, glucose from UDP-D-glucose to produce eracine Q2. The first step of the erinacines biosynthesis pathway is catalyzed by the geranylgeranyl diphosphate (GGPP) synthase eriE via conversion of farnesyl pyrophosphate and isopentyl pyrophosphate into geranylgeranyl pyrophosphate (GGPP). GGPP is then substrate of the diterpene cyclase eriG for the production of cyatha-3,12-diene. The cytochrome P450 monooxygenase eriI then hydroxylates cyatha-3,12-diene at C-14 of the seven-membered ring to produce erinacol, which is further hydroxylated at C-15 by the cytochrome P450 monooxygenase eriC to yield cyathadiol. The cytochrome P450 monooxygenase eriA then catalyzes C-11 hydroxylation in the presence of the short chain dehydrogenase/reductase (SDR) eriH, which leads to the production of cyathatriol. The acetyltransferase eriL converts cyathatriol into 11-O-acetyl-cyathatriol. The SDR eriH catalyzes further oxidation of 11-O-acetyl-cyathatriol into 1-O-acetylcyathin A3. Finally, the glycosyl transferase eriJ tranfers xylose from UDP-xylose onto C-14 of 11-O-acetyl-cyathatriol to form eracine Q. EriJ is also able to convert 11-O-acetyl-cyathatriol to eracine Q2 by using UDP-D-glucose as cosubstrate, but at a lower rate. The sequence is that of UDP-glycosyltransferase eriJ from Hericium erinaceus (Lion's mane mushroom).